The sequence spans 792 residues: Phenylalanine--tRNA ligase beta subunit (792 aa).

Residues 39–154 (LYSFASVITA…EATPLGEDLA (116 aa)) enclose the tRNA-binding domain. Residues 403-480 (RELKEVALRP…ESWNIETQNP (78 aa)) form the B5 domain. Residues aspartate 456, aspartate 462, glutamate 465, and glutamate 466 each contribute to the Mg(2+) site. The FDX-ACB domain maps to 695–791 (AIYPSSFRDL…LLTDTKGTIN (97 aa)).

This sequence belongs to the phenylalanyl-tRNA synthetase beta subunit family. Type 1 subfamily. As to quaternary structure, tetramer of two alpha and two beta subunits. Requires Mg(2+) as cofactor.

Its subcellular location is the cytoplasm. The enzyme catalyses tRNA(Phe) + L-phenylalanine + ATP = L-phenylalanyl-tRNA(Phe) + AMP + diphosphate + H(+). This Chlamydia pneumoniae (Chlamydophila pneumoniae) protein is Phenylalanine--tRNA ligase beta subunit (pheT).